A 146-amino-acid chain; its full sequence is Large-conductance mechanosensitive channel (146 aa).

2 consecutive transmembrane segments (helical) span residues 12-32 and 83-103; these read AFAM…GGAF and GNFL…FLFI.

Belongs to the MscL family. As to quaternary structure, homopentamer.

Its subcellular location is the cell inner membrane. Functionally, channel that opens in response to stretch forces in the membrane lipid bilayer. May participate in the regulation of osmotic pressure changes within the cell. This is Large-conductance mechanosensitive channel from Phocaeicola vulgatus (strain ATCC 8482 / DSM 1447 / JCM 5826 / CCUG 4940 / NBRC 14291 / NCTC 11154) (Bacteroides vulgatus).